The primary structure comprises 286 residues: Meiotically up-regulated gene 64 protein (286 aa).

Its subcellular location is the cytoplasm. Functionally, has a role in meiosis. The sequence is that of Meiotically up-regulated gene 64 protein (mug64) from Schizosaccharomyces pombe (strain 972 / ATCC 24843) (Fission yeast).